Here is a 513-residue protein sequence, read N- to C-terminus: ATP synthase subunit alpha (513 aa).

Position 169–176 (169–176) interacts with ATP; that stretch reads GDRQTGKT.

Belongs to the ATPase alpha/beta chains family. F-type ATPases have 2 components, CF(1) - the catalytic core - and CF(0) - the membrane proton channel. CF(1) has five subunits: alpha(3), beta(3), gamma(1), delta(1), epsilon(1). CF(0) has three main subunits: a(1), b(2) and c(9-12). The alpha and beta chains form an alternating ring which encloses part of the gamma chain. CF(1) is attached to CF(0) by a central stalk formed by the gamma and epsilon chains, while a peripheral stalk is formed by the delta and b chains.

It is found in the cell inner membrane. It catalyses the reaction ATP + H2O + 4 H(+)(in) = ADP + phosphate + 5 H(+)(out). Functionally, produces ATP from ADP in the presence of a proton gradient across the membrane. The alpha chain is a regulatory subunit. The sequence is that of ATP synthase subunit alpha from Bordetella pertussis (strain Tohama I / ATCC BAA-589 / NCTC 13251).